Here is a 236-residue protein sequence, read N- to C-terminus: Methylosome subunit pICln (236 aa).

An N-acetylserine modification is found at Ser-2. Positions 88 to 109 are disordered; the sequence is EESKEPPSDEDEEDNDDIEPIS. Phosphoserine occurs at positions 95, 143, 192, 194, 197, and 209. Positions 95–107 are enriched in acidic residues; it reads SDEDEEDNDDIEP. Thr-222 carries the phosphothreonine modification.

The protein belongs to the pICln (TC 1.A.47) family. Component of the methylosome, a 20S complex containing at least PRMT5/SKB1, WDR77/MEP50 and CLNS1A/pICln. May mediate SNRPD1 and SNRPD3 methylation. Forms a 6S pICln-Sm complex composed of CLNS1A/pICln, SNRPD1, SNRPD2, SNRPE, SNRPF and SNRPG; ring-like structure where CLNS1A/pICln mimics additional Sm proteins and which is unable to assemble into the core snRNP. Interacts with LSM10 and LSM11.

It localises to the cytoplasm. Its subcellular location is the cytosol. The protein resides in the nucleus. The protein localises to the cytoskeleton. Involved in both the assembly of spliceosomal snRNPs and the methylation of Sm proteins. Chaperone that regulates the assembly of spliceosomal U1, U2, U4 and U5 small nuclear ribonucleoproteins (snRNPs), the building blocks of the spliceosome, and thereby plays an important role in the splicing of cellular pre-mRNAs. Most spliceosomal snRNPs contain a common set of Sm proteins SNRPB, SNRPD1, SNRPD2, SNRPD3, SNRPE, SNRPF and SNRPG that assemble in a heptameric protein ring on the Sm site of the small nuclear RNA to form the core snRNP (Sm core). In the cytosol, the Sm proteins SNRPD1, SNRPD2, SNRPE, SNRPF and SNRPG are trapped in an inactive 6S pICln-Sm complex by the chaperone CLNS1A that controls the assembly of the core snRNP. Dissociation by the SMN complex of CLNS1A from the trapped Sm proteins and their transfer to an SMN-Sm complex triggers the assembly of core snRNPs and their transport to the nucleus. In Mus musculus (Mouse), this protein is Methylosome subunit pICln (Clns1a).